The following is a 157-amino-acid chain: Small ribosomal subunit protein uS7 (157 aa).

The protein belongs to the universal ribosomal protein uS7 family. In terms of assembly, part of the 30S ribosomal subunit. Contacts proteins S9 and S11.

Functionally, one of the primary rRNA binding proteins, it binds directly to 16S rRNA where it nucleates assembly of the head domain of the 30S subunit. Is located at the subunit interface close to the decoding center, probably blocks exit of the E-site tRNA. The sequence is that of Small ribosomal subunit protein uS7 from Chlamydia abortus (strain DSM 27085 / S26/3) (Chlamydophila abortus).